Consider the following 203-residue polypeptide: Small ribosomal subunit protein uS4 (203 aa).

Positions 93-156 constitute an S4 RNA-binding domain; that stretch reads QRLDNVVFRL…MKVPAILEAV (64 aa).

It belongs to the universal ribosomal protein uS4 family. As to quaternary structure, part of the 30S ribosomal subunit. Contacts protein S5. The interaction surface between S4 and S5 is involved in control of translational fidelity.

One of the primary rRNA binding proteins, it binds directly to 16S rRNA where it nucleates assembly of the body of the 30S subunit. Its function is as follows. With S5 and S12 plays an important role in translational accuracy. This Lactococcus lactis subsp. lactis (strain IL1403) (Streptococcus lactis) protein is Small ribosomal subunit protein uS4.